A 764-amino-acid chain; its full sequence is MTITHNLGFPRIGAQRELKRAVEAYWSGKKTAADLEETGRELRAAHWQRQAASGLQWVPVGDFAWYDHILEWTTLLGAVPARFGQPEGQPVSLDTLFRMGRGRAPSGTPTAACEMTKWFDTNYHYIVPELVPGQTFRIAREYLFEQVQEAQALGHQVKPVIPGPLTWLWQGKGDAYAGGASDAAKLQLLDTLLPVYAEVLARLARLGVEWVQIDEPILVLDLPQAWRDAFRTAYARLADAPVKLLVATYFGGLNDNLATALALPVAGLHVDLIRAPGQLQDVAAGLRPGQVLSAGIIDGRNIWRTDLDAALAALAPARQLLGERLWLAPSCSLLHVPVDLANETDLDAELRSWLSFAAQKLDELGLLGRALADARAPGVDEALAAQRAALRARRQSARIHNPAVGRRMAESNAVTRERAPFAERIARQQQLLKLPAFPTTTIGSFPQTAEIRALRRDWKSGALSDSAYEAAIRKEIESVIRFQEKIGLDVLVHGEPERNDMVEYFGELLAGFAFTRNGWVQSYGSRCVKPPIIFGDVARPAPMTVGWSSYAQSLTDKPVKGMLTGPVTILQWSFVRDDQPREQTCRQLALALRDEVVDLEQAGVRVIQIDEPAIREGLPLRRADWQAYLDWAVDCFRLSTAGVAADTQIHTHMCYSEFNDIIESIAAMDADVITIETSRSNMELLKAFEDFRYPNDIGPGVYDIHSPNVPDVDWMVGLMRKAAGRLPSERLWVNPDCGLKTRAWPETEAALVGMVEAARALRAG.

Residues 16-19 (RELK) and Lys-117 contribute to the 5-methyltetrahydropteroyltri-L-glutamate site. L-homocysteine-binding positions include 442 to 444 (IGS) and Glu-495. L-methionine contacts are provided by residues 442 to 444 (IGS) and Glu-495. Residues 526–527 (RC) and Trp-572 each bind 5-methyltetrahydropteroyltri-L-glutamate. Asp-610 lines the L-homocysteine pocket. Asp-610 provides a ligand contact to L-methionine. Glu-616 is a binding site for 5-methyltetrahydropteroyltri-L-glutamate. Positions 652, 654, and 676 each coordinate Zn(2+). His-705 acts as the Proton donor in catalysis. Residue Cys-737 participates in Zn(2+) binding.

Belongs to the vitamin-B12 independent methionine synthase family. The cofactor is Zn(2+).

It catalyses the reaction 5-methyltetrahydropteroyltri-L-glutamate + L-homocysteine = tetrahydropteroyltri-L-glutamate + L-methionine. It participates in amino-acid biosynthesis; L-methionine biosynthesis via de novo pathway; L-methionine from L-homocysteine (MetE route): step 1/1. Catalyzes the transfer of a methyl group from 5-methyltetrahydrofolate to homocysteine resulting in methionine formation. This chain is 5-methyltetrahydropteroyltriglutamate--homocysteine methyltransferase, found in Bordetella petrii (strain ATCC BAA-461 / DSM 12804 / CCUG 43448).